A 425-amino-acid chain; its full sequence is [Pyruvate dehydrogenase (acetyl-transferring)] kinase, mitochondrial (425 aa).

H178 carries the post-translational modification Phosphohistidine; by autocatalysis. Positions 180–418 constitute a Histidine kinase domain; it reads NVAVEIALDI…DVYIHLNRLC (239 aa). ATP is bound by residues 296 to 303, D336, 355 to 356, and 379 to 384; these read EILKNSLR, TT, and GFGFGL.

This sequence belongs to the PDK/BCKDK protein kinase family.

The protein resides in the mitochondrion matrix. The catalysed reaction is L-seryl-[pyruvate dehydrogenase E1 alpha subunit] + ATP = O-phospho-L-seryl-[pyruvate dehydrogenase E1 alpha subunit] + ADP + H(+). In terms of biological role, inhibits the mitochondrial pyruvate dehydrogenase complex by phosphorylation of the E1 alpha subunit, thus contributing to the regulation of glucose metabolism. The chain is [Pyruvate dehydrogenase (acetyl-transferring)] kinase, mitochondrial (pkp1) from Schizosaccharomyces pombe (strain 972 / ATCC 24843) (Fission yeast).